The following is a 318-amino-acid chain: Porphobilinogen deaminase (318 aa).

At Cys241 the chain carries S-(dipyrrolylmethanemethyl)cysteine.

The protein belongs to the HMBS family. In terms of assembly, monomer. The cofactor is dipyrromethane.

The enzyme catalyses 4 porphobilinogen + H2O = hydroxymethylbilane + 4 NH4(+). The protein operates within porphyrin-containing compound metabolism; protoporphyrin-IX biosynthesis; coproporphyrinogen-III from 5-aminolevulinate: step 2/4. Its function is as follows. Tetrapolymerization of the monopyrrole PBG into the hydroxymethylbilane pre-uroporphyrinogen in several discrete steps. The chain is Porphobilinogen deaminase from Geotalea uraniireducens (strain Rf4) (Geobacter uraniireducens).